A 334-amino-acid chain; its full sequence is Protein-methionine-sulfoxide reductase catalytic subunit MsrP (334 aa).

Positions 1 to 44 (MKKNQFLKESDVTAESVFFMKRRQVLKALGISAAAFSLPHAAHA) form a signal peptide, tat-type signal. Mo-molybdopterin contacts are provided by residues asparagine 88, 91–92 (YE), cysteine 146, threonine 181, asparagine 233, arginine 238, and 249–251 (GIK).

The protein belongs to the MsrP family. As to quaternary structure, heterodimer of a catalytic subunit (MsrP) and a heme-binding subunit (MsrQ). The cofactor is Mo-molybdopterin. In terms of processing, predicted to be exported by the Tat system. The position of the signal peptide cleavage has not been experimentally proven.

The protein localises to the periplasm. It carries out the reaction L-methionyl-[protein] + a quinone + H2O = L-methionyl-(S)-S-oxide-[protein] + a quinol. The catalysed reaction is L-methionyl-[protein] + a quinone + H2O = L-methionyl-(R)-S-oxide-[protein] + a quinol. In terms of biological role, part of the MsrPQ system that repairs oxidized periplasmic proteins containing methionine sulfoxide residues (Met-O), using respiratory chain electrons. Thus protects these proteins from oxidative-stress damage caused by reactive species of oxygen and chlorine generated by the host defense mechanisms. MsrPQ is essential for the maintenance of envelope integrity under bleach stress, rescuing a wide series of structurally unrelated periplasmic proteins from methionine oxidation, including the primary periplasmic chaperone SurA and the lipoprotein Pal. The catalytic subunit MsrP is non-stereospecific, being able to reduce both (R-) and (S-) diastereoisomers of methionine sulfoxide. The sequence is that of Protein-methionine-sulfoxide reductase catalytic subunit MsrP from Escherichia coli O6:H1 (strain CFT073 / ATCC 700928 / UPEC).